We begin with the raw amino-acid sequence, 298 residues long: Phosphatidylglycerol--prolipoprotein diacylglyceryl transferase (298 aa).

Transmembrane regions (helical) follow at residues 17 to 37 (LAVR…IVVG), 59 to 79 (MMFY…VLFY), 97 to 117 (GGMS…LFAW), 129 to 149 (FVAP…FING), 204 to 224 (SQLY…FLFA), 230 to 250 (MGAI…TVEF), and 257 to 277 (FLGL…PMIL). Arginine 142 serves as a coordination point for a 1,2-diacyl-sn-glycero-3-phospho-(1'-sn-glycerol).

Belongs to the Lgt family.

It is found in the cell inner membrane. The enzyme catalyses L-cysteinyl-[prolipoprotein] + a 1,2-diacyl-sn-glycero-3-phospho-(1'-sn-glycerol) = an S-1,2-diacyl-sn-glyceryl-L-cysteinyl-[prolipoprotein] + sn-glycerol 1-phosphate + H(+). It functions in the pathway protein modification; lipoprotein biosynthesis (diacylglyceryl transfer). Its function is as follows. Catalyzes the transfer of the diacylglyceryl group from phosphatidylglycerol to the sulfhydryl group of the N-terminal cysteine of a prolipoprotein, the first step in the formation of mature lipoproteins. The sequence is that of Phosphatidylglycerol--prolipoprotein diacylglyceryl transferase from Burkholderia orbicola (strain MC0-3).